Reading from the N-terminus, the 547-residue chain is Chaperonin GroEL (547 aa).

Residues 30–33 (TLGP), Lys51, 87–91 (DGTTT), Gly415, and Asp495 each bind ATP.

It belongs to the chaperonin (HSP60) family. As to quaternary structure, forms a cylinder of 14 subunits composed of two heptameric rings stacked back-to-back. Interacts with the co-chaperonin GroES.

Its subcellular location is the cytoplasm. It catalyses the reaction ATP + H2O + a folded polypeptide = ADP + phosphate + an unfolded polypeptide.. In terms of biological role, together with its co-chaperonin GroES, plays an essential role in assisting protein folding. The GroEL-GroES system forms a nano-cage that allows encapsulation of the non-native substrate proteins and provides a physical environment optimized to promote and accelerate protein folding. This chain is Chaperonin GroEL, found in Pasteurella multocida (strain Pm70).